A 257-amino-acid chain; its full sequence is UPF0246 protein Spro_0686 (257 aa).

It belongs to the UPF0246 family.

The protein is UPF0246 protein Spro_0686 of Serratia proteamaculans (strain 568).